Here is a 479-residue protein sequence, read N- to C-terminus: (R)-1-hydroxy-2-aminoethylphosphonate ammonia-lyase (479 aa).

Lysine 317 bears the N6-(pyridoxal phosphate)lysine mark.

This sequence belongs to the class-III pyridoxal-phosphate-dependent aminotransferase family. The cofactor is pyridoxal 5'-phosphate.

The catalysed reaction is (1R)-(2-amino-1-hydroxyethyl)phosphonate = phosphonoacetaldehyde + NH4(+). Involved in phosphonate degradation. Functions as a lyase that catalyzes an elimination reaction on the naturally occurring compound (R)-1-hydroxy-2-aminoethylphosphonate ((R)-HAEP), releasing ammonia and generating phosphonoacetaldehyde (PAA), which can be then hydrolyzed by PhnX, encoded by an adjacent gene. Thus, catalyzes a reaction that serves to funnel (R)-HAEP into the hydrolytic pathway for aminoethylphosphonate (AEP, the most common biogenic phosphonate) degradation, expanding the scope and the usefulness of the pathway itself. Is not active toward the (S) enantiomer of HAEP or other HAEP-related compounds such as ethanolamine and D,L-isoserine, indicating a very high substrate specificity. The protein is (R)-1-hydroxy-2-aminoethylphosphonate ammonia-lyase of Vibrio splendidus (strain 12B01).